The primary structure comprises 49 residues: Large ribosomal subunit protein bL33B (49 aa).

Belongs to the bacterial ribosomal protein bL33 family.

The protein is Large ribosomal subunit protein bL33B of Geobacillus kaustophilus (strain HTA426).